The sequence spans 475 residues: Integrator complex subunit 15 (475 aa).

A disordered region spans residues 402-444 (YPHIHPGRPSPLSPHSPHQSTLSSPHSPHTVLTAHPTHPALAP). A compositionally biased stretch (low complexity) spans 416–430 (HSPHQSTLSSPHSPH).

This sequence belongs to the Integrator subunit 15 family. As to quaternary structure, component of the Integrator complex, composed of core subunits INTS1, INTS2, INTS3, INTS4, INTS5, INTS6, INTS7, INTS8, INTS9/RC74, INTS10, INTS11/CPSF3L, INTS12, INTS13, INTS14 and INTS15. The core complex associates with protein phosphatase 2A subunits PPP2CA and PPP2R1A, to form the Integrator-PP2A (INTAC) complex. INTS15 is part of the tail subcomplex, composed of INTS10, INTS13, INTS14 and INTS15.

Its subcellular location is the nucleus. The protein localises to the chromosome. Functionally, component of the integrator complex, a multiprotein complex that terminates RNA polymerase II (Pol II) transcription in the promoter-proximal region of genes. The integrator complex provides a quality checkpoint during transcription elongation by driving premature transcription termination of transcripts that are unfavorably configured for transcriptional elongation: the complex terminates transcription by (1) catalyzing dephosphorylation of the C-terminal domain (CTD) of Pol II subunit POLR2A/RPB1 and SUPT5H/SPT5, (2) degrading the exiting nascent RNA transcript via endonuclease activity and (3) promoting the release of Pol II from bound DNA. The integrator complex is also involved in terminating the synthesis of non-coding Pol II transcripts, such as enhancer RNAs (eRNAs), small nuclear RNAs (snRNAs), telomerase RNAs and long non-coding RNAs (lncRNAs). INTS15 is part of the integrator tail module that acts as a platform for the recruitment of transcription factors at promoters. Within the integrator complex, INTS15 is required to bridge different integrator modules. This is Integrator complex subunit 15 (ints15) from Danio rerio (Zebrafish).